Reading from the N-terminus, the 266-residue chain is Histidinol-phosphatase (266 aa).

Mg(2+)-binding residues include Glu-69, Asp-84, Ile-86, and Asp-87. Glu-69 provides a ligand contact to substrate. Substrate contacts are provided by residues 86 to 89 (IDGT), Arg-190, and Asp-218. Residue Asp-218 participates in Mg(2+) binding.

This sequence belongs to the inositol monophosphatase superfamily. Mg(2+) is required as a cofactor.

The catalysed reaction is L-histidinol phosphate + H2O = L-histidinol + phosphate. The protein operates within amino-acid biosynthesis; L-histidine biosynthesis; L-histidine from 5-phospho-alpha-D-ribose 1-diphosphate: step 8/9. Its function is as follows. Catalyzes the dephosphorylation of histidinol-phosphate to histidinol, the direct precursor of histidine. This Streptomyces coelicolor (strain ATCC BAA-471 / A3(2) / M145) protein is Histidinol-phosphatase.